A 364-amino-acid chain; its full sequence is D-alanine--D-alanine ligase (364 aa).

The ATP-grasp domain maps to 134 to 344 (KVLLKSFNIP…YESLVDKLIT (211 aa)). 167–222 (NNKLNYPVIVKPSVLGSSIGINVAYNVSQIEKYIEEAFEYDLTVVVEKFIKAREIE) is an ATP binding site. Mg(2+) is bound by residues aspartate 297, glutamate 311, and asparagine 313.

Belongs to the D-alanine--D-alanine ligase family. Mg(2+) is required as a cofactor. It depends on Mn(2+) as a cofactor.

The protein resides in the cytoplasm. The enzyme catalyses 2 D-alanine + ATP = D-alanyl-D-alanine + ADP + phosphate + H(+). The protein operates within cell wall biogenesis; peptidoglycan biosynthesis. Its function is as follows. Cell wall formation. The sequence is that of D-alanine--D-alanine ligase from Borrelia duttonii (strain Ly).